A 418-amino-acid chain; its full sequence is Putative ion-transport protein YfeO (418 aa).

11 helical membrane-spanning segments follow: residues 9-31 (MLLL…IVVM), 55-77 (SPLW…IRFS), 90-112 (LIGA…LGLA), 122-140 (PIMT…RLLP), 147-169 (WTIL…AALI), 189-211 (PLMA…FSLP), 223-244 (ILSG…VWCL), 259-281 (LVLG…VSLF), 301-323 (YFLL…FRGG), 343-363 (VPAV…VLVV), and 376-398 (VVVP…WLLL).

It belongs to the chloride channel (TC 2.A.49) family.

The protein localises to the cell membrane. This is Putative ion-transport protein YfeO (yfeO) from Escherichia coli O157:H7.